The chain runs to 319 residues: NADH-quinone oxidoreductase subunit H 1 (319 aa).

9 consecutive transmembrane segments (helical) span residues 1–21 (MIGL…LLVV), 77–97 (ILAP…VAFG), 107–127 (VGVL…MLGA), 147–167 (LAYE…AGSL), 179–199 (VWFV…GVAA), 214–234 (LVAG…FLGE), 238–258 (VLLV…GPWL), 262–282 (IWFG…RATL), and 293–313 (FAWK…GIVV).

The protein belongs to the complex I subunit 1 family. As to quaternary structure, NDH-1 is composed of 14 different subunits. Subunits NuoA, H, J, K, L, M, N constitute the membrane sector of the complex.

It localises to the cell inner membrane. The catalysed reaction is a quinone + NADH + 5 H(+)(in) = a quinol + NAD(+) + 4 H(+)(out). Functionally, NDH-1 shuttles electrons from NADH, via FMN and iron-sulfur (Fe-S) centers, to quinones in the respiratory chain. The immediate electron acceptor for the enzyme in this species is believed to be ubiquinone. Couples the redox reaction to proton translocation (for every two electrons transferred, four hydrogen ions are translocated across the cytoplasmic membrane), and thus conserves the redox energy in a proton gradient. This subunit may bind ubiquinone. The polypeptide is NADH-quinone oxidoreductase subunit H 1 (Rhodopseudomonas palustris (strain HaA2)).